A 404-amino-acid polypeptide reads, in one-letter code: Beta-ketoacyl-[acyl-carrier-protein] synthase III, chloroplastic (404 aa).

A chloroplast-targeting transit peptide spans 1–43 (MANASGFFTHPSIPNLRSRIHVPVRVSGSGFCVSNRFSKRVLC). Catalysis depends on residues cysteine 179, histidine 330, and asparagine 360.

The protein belongs to the thiolase-like superfamily. FabH family.

It is found in the plastid. The protein resides in the chloroplast. It catalyses the reaction malonyl-[ACP] + acetyl-CoA + H(+) = 3-oxobutanoyl-[ACP] + CO2 + CoA. It participates in lipid metabolism; fatty acid biosynthesis. Catalyzes the condensation reaction of fatty acid synthesis by the addition to an acyl acceptor of two carbons from malonyl-ACP. KAS III catalyzes the first condensation reaction which initiates fatty acid synthesis and may therefore play a role in governing the total rate of fatty acid production. Possesses both acetoacetyl-ACP synthase and acetyl transacylase activities. The chain is Beta-ketoacyl-[acyl-carrier-protein] synthase III, chloroplastic from Arabidopsis thaliana (Mouse-ear cress).